Here is a 204-residue protein sequence, read N- to C-terminus: Per os infectivity factor 3 (204 aa).

In terms of assembly, forms the PIF complex together with PIF1 and PIF2. The complex also interacts with per os infectivity factor PIF0.

Functionally, per os factor that plays a role in the initiation of host midgut infection. Unlike PIF1 and PIF2, PIF3 is not involved in specific binding of occluded virions (ODV) to the host midgut target cells. This Lepidoptera (butterflies and moths) protein is Per os infectivity factor 3 (AC115).